We begin with the raw amino-acid sequence, 269 residues long: Regulatory protein RecX (269 aa).

Belongs to the RecX family.

Its subcellular location is the cytoplasm. Modulates RecA activity. In Lactococcus lactis subsp. cremoris (strain SK11), this protein is Regulatory protein RecX.